Reading from the N-terminus, the 324-residue chain is Ribosomal RNA small subunit methyltransferase H (324 aa).

Residues Ala40–His42, Asp60, Leu94, Asp108, and His115 each bind S-adenosyl-L-methionine. The segment at Glu301 to Gly324 is disordered. Basic and acidic residues predominate over residues Arg315 to Gly324.

It belongs to the methyltransferase superfamily. RsmH family.

Its subcellular location is the cytoplasm. The catalysed reaction is cytidine(1402) in 16S rRNA + S-adenosyl-L-methionine = N(4)-methylcytidine(1402) in 16S rRNA + S-adenosyl-L-homocysteine + H(+). Specifically methylates the N4 position of cytidine in position 1402 (C1402) of 16S rRNA. The sequence is that of Ribosomal RNA small subunit methyltransferase H from Maridesulfovibrio salexigens (strain ATCC 14822 / DSM 2638 / NCIMB 8403 / VKM B-1763) (Desulfovibrio salexigens).